Reading from the N-terminus, the 307-residue chain is Putative gluconeogenesis factor (307 aa).

Belongs to the gluconeogenesis factor family.

It is found in the cytoplasm. In terms of biological role, required for morphogenesis under gluconeogenic growth conditions. This is Putative gluconeogenesis factor from Yersinia pestis.